Here is a 320-residue protein sequence, read N- to C-terminus: Aspartate carbamoyltransferase catalytic subunit (320 aa).

Carbamoyl phosphate is bound by residues R53 and T54. Residue K82 participates in L-aspartate binding. R103, H131, and Q134 together coordinate carbamoyl phosphate. L-aspartate-binding residues include R164 and R227. Residues L266 and P267 each coordinate carbamoyl phosphate.

This sequence belongs to the aspartate/ornithine carbamoyltransferase superfamily. ATCase family. In terms of assembly, heterododecamer (2C3:3R2) of six catalytic PyrB chains organized as two trimers (C3), and six regulatory PyrI chains organized as three dimers (R2).

It catalyses the reaction carbamoyl phosphate + L-aspartate = N-carbamoyl-L-aspartate + phosphate + H(+). Its pathway is pyrimidine metabolism; UMP biosynthesis via de novo pathway; (S)-dihydroorotate from bicarbonate: step 2/3. In terms of biological role, catalyzes the condensation of carbamoyl phosphate and aspartate to form carbamoyl aspartate and inorganic phosphate, the committed step in the de novo pyrimidine nucleotide biosynthesis pathway. The sequence is that of Aspartate carbamoyltransferase catalytic subunit from Bifidobacterium adolescentis (strain ATCC 15703 / DSM 20083 / NCTC 11814 / E194a).